The primary structure comprises 337 residues: Glutaredoxin-3 (337 aa).

A2 is subject to N-acetylalanine. Residues A2 to S119 enclose the Thioredoxin domain. Phosphoserine is present on S119. Glutaredoxin domains lie at H144 to E238 and E239 to N337. 2 residues coordinate [2Fe-2S] cluster: C161 and C263.

In terms of assembly, homodimer; the homodimer is independent of 2Fe-2S clusters. Heterotrimer; forms a heterotrimeric complex composed by two BOLA2 molecules and one GLRX3 molecule; linked by [2Fe-2S] clusters. Interacts (via N-terminus) with PRKCQ/PKC-theta. Interacts (via C-terminus) with CSRP3. Interacts with CSRP2.

The protein resides in the cytoplasm. The protein localises to the cytosol. It localises to the cell cortex. It is found in the myofibril. Its subcellular location is the sarcomere. The protein resides in the z line. Its function is as follows. Together with BOLA2, acts as a cytosolic iron-sulfur (Fe-S) cluster assembly factor that facilitates [2Fe-2S] cluster insertion into a subset of cytosolic proteins. Acts as a critical negative regulator of cardiac hypertrophy and a positive inotropic regulator. Required for hemoglobin maturation. Does not possess any thyoredoxin activity since it lacks the conserved motif that is essential for catalytic activity. The protein is Glutaredoxin-3 (Glrx3) of Mus musculus (Mouse).